The primary structure comprises 554 residues: Chaperonin GroEL (554 aa).

ATP contacts are provided by residues 29–32 (TLGP), lysine 50, 86–90 (DGTTT), glycine 418, and aspartate 499. Positions 528-554 (HEEDNNTNRSGGGVGGGHHGGMGGMDF) are disordered. A compositionally biased stretch (gly residues) spans 537–554 (SGGGVGGGHHGGMGGMDF).

It belongs to the chaperonin (HSP60) family. As to quaternary structure, forms a cylinder of 14 subunits composed of two heptameric rings stacked back-to-back. Interacts with the co-chaperonin GroES.

It is found in the cytoplasm. The enzyme catalyses ATP + H2O + a folded polypeptide = ADP + phosphate + an unfolded polypeptide.. In terms of biological role, together with its co-chaperonin GroES, plays an essential role in assisting protein folding. The GroEL-GroES system forms a nano-cage that allows encapsulation of the non-native substrate proteins and provides a physical environment optimized to promote and accelerate protein folding. This Orientia tsutsugamushi (strain Boryong) (Rickettsia tsutsugamushi) protein is Chaperonin GroEL.